We begin with the raw amino-acid sequence, 278 residues long: Large ribosomal subunit protein uL2 (278 aa).

The segment at 201-278 is disordered; the sequence is HGNINDGKAG…IMRSRHQKKK (78 aa). Basic residues predominate over residues 210–221; the sequence is GRSRWRGKRPHV.

This sequence belongs to the universal ribosomal protein uL2 family. As to quaternary structure, part of the 50S ribosomal subunit. Forms a bridge to the 30S subunit in the 70S ribosome.

Its function is as follows. One of the primary rRNA binding proteins. Required for association of the 30S and 50S subunits to form the 70S ribosome, for tRNA binding and peptide bond formation. It has been suggested to have peptidyltransferase activity; this is somewhat controversial. Makes several contacts with the 16S rRNA in the 70S ribosome. The sequence is that of Large ribosomal subunit protein uL2 from Allorhizobium ampelinum (strain ATCC BAA-846 / DSM 112012 / S4) (Agrobacterium vitis (strain S4)).